Here is a 500-residue protein sequence, read N- to C-terminus: 4-aminobutyrate aminotransferase, mitochondrial (500 aa).

A mitochondrion-targeting transit peptide spans 1 to 27 (MAFLLTTRRLVCSSQKNLHLFTPGSRY). C163 provides a ligand contact to [2Fe-2S] cluster. Residue 164–165 (GS) participates in pyridoxal 5'-phosphate binding. [2Fe-2S] cluster is bound at residue C166. Residue R220 participates in substrate binding. Residue K231 is modified to N6-succinyllysine. At K252 the chain carries N6-acetyllysine; alternate. K252 bears the N6-succinyllysine; alternate mark. N6-acetyllysine is present on residues K279 and K318. K357 bears the N6-(pyridoxal phosphate)lysine mark. T381 provides a ligand contact to pyridoxal 5'-phosphate. An N6-acetyllysine; alternate modification is found at K413. K413 carries the post-translational modification N6-succinyllysine; alternate. Residues K452 and K470 each carry the N6-acetyllysine modification.

The protein belongs to the class-III pyridoxal-phosphate-dependent aminotransferase family. As to quaternary structure, homodimer; disulfide-linked. Pyridoxal 5'-phosphate is required as a cofactor. The cofactor is [2Fe-2S] cluster.

It localises to the mitochondrion matrix. The catalysed reaction is 4-aminobutanoate + 2-oxoglutarate = succinate semialdehyde + L-glutamate. It carries out the reaction (S)-3-amino-2-methylpropanoate + 2-oxoglutarate = 2-methyl-3-oxopropanoate + L-glutamate. Functionally, catalyzes the conversion of gamma-aminobutyrate and L-beta-aminoisobutyrate to succinate semialdehyde and methylmalonate semialdehyde, respectively. Can also convert delta-aminovalerate and beta-alanine. In Rattus norvegicus (Rat), this protein is 4-aminobutyrate aminotransferase, mitochondrial.